The primary structure comprises 785 residues: Rho GTPase-activating protein 10 (785 aa).

The 256-residue stretch at 7-262 (EFSDCYLDSP…IRQNPKDHKR (256 aa)) folds into the BAR domain. The PH domain maps to 265-372 (QFTAEGYLYV…WLEVLGGKEA (108 aa)). The Rho-GAP domain occupies 389 to 574 (AQLDKMGFTI…ILIENHEKIF (186 aa)). The interval 576-708 (TPPDATLPEP…PAVTPPSPKL (133 aa)) is disordered. Positions 584 to 595 (EPGPLSAPPNAP) are enriched in pro residues. The span at 598–608 (QSKRQGQRTKR) shows a compositional bias: basic residues. The span at 622–632 (GDRPSLPKEDT) shows a compositional bias: basic and acidic residues. The segment covering 633–650 (PPSSLDSLSSPSPTTATA) has biased composition (low complexity). Residues 675–697 (APSQARSSAVQWLNPQSPTTPSC) are compositionally biased toward polar residues. Residues 727–785 (IISRKARAVYPCEAEHSSELSFEIGAIFEDVQTSREPGWLEGTLNGKRGLIPQNYVKLL) enclose the SH3 domain.

Interacts with PKN3. Interacts with caspase-activated PAK2 proteolytic fragment PAK-2p34; the interaction does not affect ARHGAP10 GTPase activation activity towards RHOA and CDC42. Interacts via its SH3 domain with PTK2/FAK1. Interacts with PTK2B/PYK2; the interaction negatively regulates ARHGAP10 GTPase-activating activity. Interacts with MICAL1 and WDR44; complex formation might transit from GRAF2/ARHGAP10-MICAL1 to GRAF2/ARHGAP10-WDR44 complexes.

The protein localises to the cytoplasm. Its subcellular location is the perinuclear region. It localises to the cell membrane. The protein resides in the endosome membrane. Functionally, GTPase-activating protein that catalyzes the conversion of active GTP-bound Rho GTPases to their inactive GDP-bound form, thus suppressing various Rho GTPase-mediated cellular processes. Also converts Cdc42 to an inactive GDP-bound state. Essential for PTKB2 regulation of cytoskeletal organization via Rho family GTPases. Inhibits PAK2 proteolytic fragment PAK-2p34 kinase activity and changes its localization from the nucleus to the perinuclear region. Stabilizes PAK-2p34 thereby increasing stimulation of cell death. Associates with MICAL1 on the endosomal membrane to promote Rab8-Rab10-dependent tubule extension. After dissociation with MICAL1, recruits WDR44 which connects the endoplasmic reticulum (ER) with the endosomal tubule, thereby participating in the export of a subset of neosynthesized proteins. The protein is Rho GTPase-activating protein 10 (ARHGAP10) of Bos taurus (Bovine).